The following is an 83-amino-acid chain: MCNALCECLKCPGKVVCCCCSCACKMLLSIVFSALLMVVVIGLIVYFTVFYHKDKNTDEVQKQVAQLTPIVKRSIRDYFNKEY.

As to expression, endoderm-specific pattern of expression during embryogenesis; anterior and posterior midgut primordia.

Involved in morphogenesis and development. The polypeptide is Protein midgut expression 1 (mex1) (Drosophila melanogaster (Fruit fly)).